We begin with the raw amino-acid sequence, 235 residues long: Large ribosomal subunit protein uL1 (235 aa).

This sequence belongs to the universal ribosomal protein uL1 family. As to quaternary structure, part of the 50S ribosomal subunit.

Its function is as follows. Binds directly to 23S rRNA. The L1 stalk is quite mobile in the ribosome, and is involved in E site tRNA release. In terms of biological role, protein L1 is also a translational repressor protein, it controls the translation of the L11 operon by binding to its mRNA. The chain is Large ribosomal subunit protein uL1 from Micrococcus luteus (strain ATCC 4698 / DSM 20030 / JCM 1464 / CCM 169 / CCUG 5858 / IAM 1056 / NBRC 3333 / NCIMB 9278 / NCTC 2665 / VKM Ac-2230) (Micrococcus lysodeikticus).